A 156-amino-acid polypeptide reads, in one-letter code: Large ribosomal subunit protein uL15 (156 aa).

Positions 25–48 are disordered; it reads RGIGCGKGKTSGRGHKGQKARSGV. Basic residues predominate over residues 34-43; the sequence is TSGRGHKGQK.

It belongs to the universal ribosomal protein uL15 family. In terms of assembly, part of the 50S ribosomal subunit.

Its function is as follows. Binds to the 23S rRNA. This Wolbachia pipientis subsp. Culex pipiens (strain wPip) protein is Large ribosomal subunit protein uL15.